A 168-amino-acid polypeptide reads, in one-letter code: Histone doublet miniH2B-H2A (168 aa).

The protein resides in the host nucleus. It localises to the host cytoplasm. The protein localises to the virion. In terms of biological role, histone-like protein that is recruited to viral factories during viral replication and participates in viral DNA packaging and virion production probably by forming unstable nucleosome-like particles. May compact the viral DNA. The polypeptide is Histone doublet miniH2B-H2A (Melbournevirus (MelV)).